A 266-amino-acid polypeptide reads, in one-letter code: MNQRLVYVVSDSGGETAELVVKAAASQFHASPIQVKRVPYVEDKTTLAEVVALAKMNRAIIAFTLVVPEMREFLLAEAAREGVVAYDIIGPLIEKMSHLFQLTPRYEPGQVRVLDEDYFKKIEAIEFAVKYDDGRDPRGILRADIVLIGVSRTSKTPLSQYLAHKRLKVANVPIVPEVEPPEQLFRVGPGKCFGLKISPDKLLSIRRERLKSLGLNDQAIYANMDRIKEELAYFDEVVKKIGCDVIDVTNKAVEETASIIMKKLKR.

Residue 149 to 156 coordinates ADP; the sequence is GVSRTSKT.

It belongs to the pyruvate, phosphate/water dikinase regulatory protein family. PDRP subfamily.

The catalysed reaction is N(tele)-phospho-L-histidyl/L-threonyl-[pyruvate, phosphate dikinase] + ADP = N(tele)-phospho-L-histidyl/O-phospho-L-threonyl-[pyruvate, phosphate dikinase] + AMP + H(+). It catalyses the reaction N(tele)-phospho-L-histidyl/O-phospho-L-threonyl-[pyruvate, phosphate dikinase] + phosphate + H(+) = N(tele)-phospho-L-histidyl/L-threonyl-[pyruvate, phosphate dikinase] + diphosphate. Its function is as follows. Bifunctional serine/threonine kinase and phosphorylase involved in the regulation of the pyruvate, phosphate dikinase (PPDK) by catalyzing its phosphorylation/dephosphorylation. In Geobacillus kaustophilus (strain HTA426), this protein is Putative pyruvate, phosphate dikinase regulatory protein.